We begin with the raw amino-acid sequence, 407 residues long: Imidazolonepropionase (407 aa).

Fe(3+)-binding residues include histidine 72 and histidine 74. Histidine 72 and histidine 74 together coordinate Zn(2+). Residues arginine 81, tyrosine 144, and histidine 177 each coordinate 4-imidazolone-5-propanoate. Tyrosine 144 lines the N-formimidoyl-L-glutamate pocket. Fe(3+) is bound at residue histidine 242. Histidine 242 serves as a coordination point for Zn(2+). Glutamine 245 is a binding site for 4-imidazolone-5-propanoate. Aspartate 317 contributes to the Fe(3+) binding site. Position 317 (aspartate 317) interacts with Zn(2+). Asparagine 319 and glycine 321 together coordinate N-formimidoyl-L-glutamate. Threonine 322 contributes to the 4-imidazolone-5-propanoate binding site.

Belongs to the metallo-dependent hydrolases superfamily. HutI family. Requires Zn(2+) as cofactor. Fe(3+) serves as cofactor.

Its subcellular location is the cytoplasm. The enzyme catalyses 4-imidazolone-5-propanoate + H2O = N-formimidoyl-L-glutamate. It functions in the pathway amino-acid degradation; L-histidine degradation into L-glutamate; N-formimidoyl-L-glutamate from L-histidine: step 3/3. Its function is as follows. Catalyzes the hydrolytic cleavage of the carbon-nitrogen bond in imidazolone-5-propanoate to yield N-formimidoyl-L-glutamate. It is the third step in the universal histidine degradation pathway. The protein is Imidazolonepropionase of Aliivibrio salmonicida (strain LFI1238) (Vibrio salmonicida (strain LFI1238)).